Here is a 318-residue protein sequence, read N- to C-terminus: Ribose-phosphate pyrophosphokinase 1 (318 aa).

ATP is bound by residues 43–45 (DGE) and 102–103 (RQ). The Mg(2+) site is built by histidine 136 and aspartate 176. Lysine 199 is a catalytic residue. D-ribose 5-phosphate contacts are provided by residues arginine 201, aspartate 225, and 229–233 (DTAGT).

The protein belongs to the ribose-phosphate pyrophosphokinase family. Class I subfamily. In terms of assembly, homohexamer. The cofactor is Mg(2+).

It localises to the cytoplasm. It carries out the reaction D-ribose 5-phosphate + ATP = 5-phospho-alpha-D-ribose 1-diphosphate + AMP + H(+). Its pathway is metabolic intermediate biosynthesis; 5-phospho-alpha-D-ribose 1-diphosphate biosynthesis; 5-phospho-alpha-D-ribose 1-diphosphate from D-ribose 5-phosphate (route I): step 1/1. Involved in the biosynthesis of the central metabolite phospho-alpha-D-ribosyl-1-pyrophosphate (PRPP) via the transfer of pyrophosphoryl group from ATP to 1-hydroxyl of ribose-5-phosphate (Rib-5-P). The protein is Ribose-phosphate pyrophosphokinase 1 of Listeria monocytogenes serotype 4b (strain F2365).